A 311-amino-acid chain; its full sequence is Replicative helicase loader DnaI (311 aa).

An N-terminal domain (Nd) region spans residues 1–136 (MEPIGRSLQG…LGATFQQVDI (136 aa)). Zn(2+) contacts are provided by Cys67, Cys70, His84, and Cys101. The tract at residues 137 to 311 (SDPSRLAMFQ…RLDGENRRHP (175 aa)) is C-terminal domain (Cd). 168-175 (GKFGVGKT) provides a ligand contact to ATP.

It belongs to the DnaI family. The DNA replisome assembles sequentially on oriC in this order; DnaA, DnaD, DnaB, DnaI-DnaC helicase. Monomer with a very minor amount of dimer in solution. Interacts with replicative helicase (from G.stearothermophilus, called DnaB); this interaction is disrupted by DnaD. Interacts with replicative helicase DnaC, forms a DnaC(6):DnaI(6) complex. Interacts with the helicase as 3 dimers. A stable complex with DnaG primase, DnaI(6):helicase(6):DnaG(3) fragment can be isolated; DnaI and DnaG do not contact each other (helicase and DnaG in this complex are derived from G.stearothermophilus). Zn(2+) is required as a cofactor.

It is found in the cytoplasm. The catalysed reaction is ATP + H2O = ADP + phosphate + H(+). Helps load the DnaC replicative helicase onto single-stranded (ss)DNA and simulates the helicase activity; in the presence of DnaB more helicase activity is seen. Regulates DnaC helicase activity, at low concentrations stimulates the DNA helicase and ATPase activities of DnaC. Has no measurable ATPase activity after 1 hour incubation of 6 uM DnaI with or without DNA. Another group has found the protein has weak ATPase activity that is not stimulated by ssDNA. Whole protein binds forked DNA (but not ssDNA) weakly; ATP and ADPNP (probably 5'-adenylyl beta, gamma-imidodiphosphate) have no effect on DNA binding. DnaB, DnaD and DnaI may be required for a PriA-independent pathway of replication fork restart. The polypeptide is Replicative helicase loader DnaI (Bacillus subtilis (strain 168)).